Reading from the N-terminus, the 354-residue chain is Protein C42 (354 aa).

The short motif at 349 to 352 (KRKK) is the Nuclear localization signal element.

Belongs to the baculoviridae C42 protein family.

It is found in the host nucleus. This is Protein C42 from Orgyia pseudotsugata (Douglas-fir tussock moth).